The primary structure comprises 249 residues: Zinc import ATP-binding protein ZnuC (249 aa).

The ABC transporter domain maps to 1–219 (MRLVSLRNAT…PEYQALFGSG (219 aa)). 36 to 43 (GPNGSGKS) provides a ligand contact to ATP.

It belongs to the ABC transporter superfamily. Zinc importer (TC 3.A.1.15.5) family. The complex is composed of two ATP-binding proteins (ZnuC), two transmembrane proteins (ZnuB) and a solute-binding protein (ZnuA).

The protein resides in the cell inner membrane. The catalysed reaction is Zn(2+)(out) + ATP(in) + H2O(in) = Zn(2+)(in) + ADP(in) + phosphate(in) + H(+)(in). Functionally, part of the ABC transporter complex ZnuABC involved in zinc import. Responsible for energy coupling to the transport system. The polypeptide is Zinc import ATP-binding protein ZnuC (Ruegeria sp. (strain TM1040) (Silicibacter sp.)).